Consider the following 101-residue polypeptide: Urease subunit beta (101 aa).

The protein belongs to the urease beta subunit family. In terms of assembly, heterotrimer of UreA (gamma), UreB (beta) and UreC (alpha) subunits. Three heterotrimers associate to form the active enzyme.

The protein localises to the cytoplasm. The enzyme catalyses urea + 2 H2O + H(+) = hydrogencarbonate + 2 NH4(+). The protein operates within nitrogen metabolism; urea degradation; CO(2) and NH(3) from urea (urease route): step 1/1. In Ectopseudomonas mendocina (strain ymp) (Pseudomonas mendocina), this protein is Urease subunit beta.